A 1043-amino-acid polypeptide reads, in one-letter code: Protein SLOW WALKER 2 (1043 aa).

4 disordered regions span residues 32-113 (SALP…SIDD), 444-469 (QGAD…VSTD), 632-737 (DIEH…GGYD), and 861-1043 (SKKK…KASE). Residues 44 to 51 (FRKPAKSK) carry the Nuclear localization signal 1 motif. The segment covering 47–59 (PAKSKTQKRKKPK) has biased composition (basic residues). Basic and acidic residues-rich tracts occupy residues 80-95 (EKGK…KDAP) and 444-466 (QGAD…KQEV). The short motif at 441 to 448 (NRKQGADD) is the Nuclear localization signal 2 element. Positions 632–645 (DIEHFEDVIEGDDV) are enriched in acidic residues. Residues 646–673 (DPNKKAENDENVVEVDHDGVEKSSRDGD) show a composition bias toward basic and acidic residues. Composition is skewed to acidic residues over residues 688–699 (DEEDDNASDDSE) and 872–983 (EEAA…DSDG). The segment covering 988–1000 (SKKKKKEKRKRKS) has biased composition (basic residues). A compositionally biased stretch (basic and acidic residues) spans 1006-1031 (EEYKHLIDQDEKEDSKTKRKATSEPT). The Nuclear localization signal 3 motif lies at 1022–1029 (TKRKATSE). Residues 1032-1043 (KKKKKKKSKASE) are compositionally biased toward basic residues.

This sequence belongs to the CBF/MAK21 family. As to quaternary structure, interacts with RBL in both the nucleolus and nucleoplasm. Binds to NOC2. In terms of tissue distribution, mainly expressed in actively dividing tissues (e.g. root tips, lateral root primordia, shoot apices, young leaves, inflorescences and pollen grains) through the plant, including roots, stems, leaves, inflorescences, siliques and seedlings, and in gametophytes.

The protein localises to the nucleus. The protein resides in the nucleolus. Together with NOC2, probably involved in pre-ribosome export from the nucleus to the cytoplasm. Required for coordinated cell cycle progression during female gametophyte and pollen development. This Arabidopsis thaliana (Mouse-ear cress) protein is Protein SLOW WALKER 2.